The primary structure comprises 557 residues: Isocitrate lyase (557 aa).

Residue Thr53 is modified to Phosphothreonine. 106-108 (SGW) contributes to the substrate binding site. Asp179 is a Mg(2+) binding site. Cys217 (proton acceptor) is an active-site residue. Substrate is bound by residues 218–219 (GH), Arg254, 437–441 (NLSPS), and Thr471.

The protein belongs to the isocitrate lyase/PEP mutase superfamily. Isocitrate lyase family. In terms of assembly, homotetramer. Mg(2+) serves as cofactor. Post-translationally, phosphorylated in response to elevated glucose levels, leading first to reversible inactivation of the enzyme (short-term inactivation), and at a later stage to proteolytic degradation of the protein (long-term inactivation).

Its subcellular location is the cytoplasm. It is found in the secreted. The protein localises to the extracellular space. The protein resides in the extracellular matrix. It localises to the vacuole. It catalyses the reaction D-threo-isocitrate = glyoxylate + succinate. The enzyme catalyses (2S,3R)-3-hydroxybutane-1,2,3-tricarboxylate = pyruvate + succinate. It functions in the pathway carbohydrate metabolism; glyoxylate cycle; (S)-malate from isocitrate: step 1/2. Its activity is regulated as follows. Phosphorylated and inactivated after addition of glucose to the cell culture (repressing conditions). Its function is as follows. Catalyzes the formation of succinate and glyoxylate from isocitrate, a key step of the glyoxylate cycle, which operates as an anaplerotic route for replenishing the tricarboxylic acid cycle. Required for growth on ethanol or acetate, but dispensable when fermentable carbon sources are available. Also acts on 2-methylisocitrate. The chain is Isocitrate lyase from Saccharomyces cerevisiae (strain ATCC 204508 / S288c) (Baker's yeast).